Reading from the N-terminus, the 345-residue chain is Histidinol-phosphate aminotransferase (345 aa).

Position 206 is an N6-(pyridoxal phosphate)lysine (Lys-206).

The protein belongs to the class-II pyridoxal-phosphate-dependent aminotransferase family. Histidinol-phosphate aminotransferase subfamily. In terms of assembly, homodimer. Requires pyridoxal 5'-phosphate as cofactor.

It catalyses the reaction L-histidinol phosphate + 2-oxoglutarate = 3-(imidazol-4-yl)-2-oxopropyl phosphate + L-glutamate. Its pathway is amino-acid biosynthesis; L-histidine biosynthesis; L-histidine from 5-phospho-alpha-D-ribose 1-diphosphate: step 7/9. The protein is Histidinol-phosphate aminotransferase of Bacteroides fragilis (strain ATCC 25285 / DSM 2151 / CCUG 4856 / JCM 11019 / LMG 10263 / NCTC 9343 / Onslow / VPI 2553 / EN-2).